The primary structure comprises 259 residues: Hydroxyacylglutathione hydrolase (259 aa).

Zn(2+)-binding residues include His-56, His-58, Asp-60, His-61, His-112, Asp-133, and His-171. Positions 224 to 238 (RTRETSVKEKADERS) are enriched in basic and acidic residues. Positions 224-245 (RTRETSVKEKADERSSGQNTSQ) are disordered.

It belongs to the metallo-beta-lactamase superfamily. Glyoxalase II family. In terms of assembly, monomer. Zn(2+) serves as cofactor.

It catalyses the reaction an S-(2-hydroxyacyl)glutathione + H2O = a 2-hydroxy carboxylate + glutathione + H(+). Its pathway is secondary metabolite metabolism; methylglyoxal degradation; (R)-lactate from methylglyoxal: step 2/2. Its function is as follows. Thiolesterase that catalyzes the hydrolysis of S-D-lactoyl-glutathione to form glutathione and D-lactic acid. This chain is Hydroxyacylglutathione hydrolase, found in Pseudomonas savastanoi pv. phaseolicola (strain 1448A / Race 6) (Pseudomonas syringae pv. phaseolicola (strain 1448A / Race 6)).